Here is a 156-residue protein sequence, read N- to C-terminus: Small ribosomal subunit protein uS7 (156 aa).

The protein belongs to the universal ribosomal protein uS7 family. As to quaternary structure, part of the 30S ribosomal subunit. Contacts proteins S9 and S11.

Functionally, one of the primary rRNA binding proteins, it binds directly to 16S rRNA where it nucleates assembly of the head domain of the 30S subunit. Is located at the subunit interface close to the decoding center, probably blocks exit of the E-site tRNA. The protein is Small ribosomal subunit protein uS7 of Nitrosomonas europaea (strain ATCC 19718 / CIP 103999 / KCTC 2705 / NBRC 14298).